A 310-amino-acid polypeptide reads, in one-letter code: UPF0761 membrane protein VF_0100 (310 aa).

A run of 6 helical transmembrane segments spans residues 34-54 (YMAY…LSVL), 97-117 (MTAV…SSID), 136-156 (FSLY…SLAA), 178-198 (LLGW…YLLV), 207-227 (HALI…VGFA), and 242-262 (ALAA…IVLI).

The protein belongs to the UPF0761 family.

The protein resides in the cell inner membrane. The sequence is that of UPF0761 membrane protein VF_0100 from Aliivibrio fischeri (strain ATCC 700601 / ES114) (Vibrio fischeri).